We begin with the raw amino-acid sequence, 224 residues long: Probable amino-acid permease protein YxeN (224 aa).

The next 6 membrane-spanning stretches (helical) occupy residues 3–23 (TIDW…LPIT), 24–44 (LFMA…LALI), 58–78 (LYIS…IYYG), 91–111 (ALTA…AEIF), 157–177 (FIGL…EMFA), and 190–210 (FETY…YSIL). In terms of domain architecture, ABC transmembrane type-1 spans 20–211 (LPITLFMAIA…VLTIIYSILQ (192 aa)).

This sequence belongs to the binding-protein-dependent transport system permease family. The complex is composed of two ATP-binding proteins (YxeO), two transmembrane proteins (YxeN) and a solute-binding protein (YxeM).

It is found in the cell membrane. In terms of biological role, probably part of the ABC transporter complex YxeMNO that could be involved in amino-acid import. May transport S-methylcysteine. Probably responsible for the translocation of the substrate across the membrane. This is Probable amino-acid permease protein YxeN (yxeN) from Bacillus subtilis (strain 168).